A 741-amino-acid polypeptide reads, in one-letter code: Phosphoribosylformylglycinamidine synthase subunit PurL (741 aa).

The active site involves histidine 54. ATP contacts are provided by tyrosine 57 and lysine 98. Position 100 (glutamate 100) interacts with Mg(2+). Substrate-binding positions include 101-104 and arginine 123; that span reads SHNH. Histidine 102 acts as the Proton acceptor in catalysis. Aspartate 124 lines the Mg(2+) pocket. Substrate is bound at residue glutamine 251. Aspartate 279 serves as a coordination point for Mg(2+). 323-325 contributes to the substrate binding site; the sequence is ESQ. Aspartate 510 and glycine 547 together coordinate ATP. Asparagine 548 is a Mg(2+) binding site. Position 550 (serine 550) interacts with substrate.

This sequence belongs to the FGAMS family. Monomer. Part of the FGAM synthase complex composed of 1 PurL, 1 PurQ and 2 PurS subunits.

The protein localises to the cytoplasm. It catalyses the reaction N(2)-formyl-N(1)-(5-phospho-beta-D-ribosyl)glycinamide + L-glutamine + ATP + H2O = 2-formamido-N(1)-(5-O-phospho-beta-D-ribosyl)acetamidine + L-glutamate + ADP + phosphate + H(+). Its pathway is purine metabolism; IMP biosynthesis via de novo pathway; 5-amino-1-(5-phospho-D-ribosyl)imidazole from N(2)-formyl-N(1)-(5-phospho-D-ribosyl)glycinamide: step 1/2. Its function is as follows. Part of the phosphoribosylformylglycinamidine synthase complex involved in the purines biosynthetic pathway. Catalyzes the ATP-dependent conversion of formylglycinamide ribonucleotide (FGAR) and glutamine to yield formylglycinamidine ribonucleotide (FGAM) and glutamate. The FGAM synthase complex is composed of three subunits. PurQ produces an ammonia molecule by converting glutamine to glutamate. PurL transfers the ammonia molecule to FGAR to form FGAM in an ATP-dependent manner. PurS interacts with PurQ and PurL and is thought to assist in the transfer of the ammonia molecule from PurQ to PurL. This is Phosphoribosylformylglycinamidine synthase subunit PurL from Picrophilus torridus (strain ATCC 700027 / DSM 9790 / JCM 10055 / NBRC 100828 / KAW 2/3).